We begin with the raw amino-acid sequence, 602 residues long: Isocyanide synthase A (602 aa).

Belongs to the isocyanide synthase family.

Its function is as follows. Isocyanide synthase involved in the biosynthesis of isocyanides (or isonitriles), a class of microbial secondary metabolites. The presence of an isonitrile moiety within a compound imparts unique biological (cytotoxic, antibacterial, and antiprotozoal) and chemical (transition metal coordination) properties and enables synthetic and biochemical applications. The protein is Isocyanide synthase A of Aspergillus fumigatus (strain ATCC MYA-4609 / CBS 101355 / FGSC A1100 / Af293) (Neosartorya fumigata).